Here is a 1187-residue protein sequence, read N- to C-terminus: uncharacterized protein (1187 aa).

5 disordered regions span residues 302–405, 419–451, 511–551, 1095–1134, and 1148–1187; these read QKSQ…KPVG, QAFSPLLSSAGPGSPAAETKTEETTLGHGRASK, KAPG…LRLE, KSQRTPQGEQSRNMWAGLLSPEPGQSGDTEEVRGTPKLPD, and PHLPKQSKASRPTGGSFSSEGTGSQTSLEDSPHTSPPASL. A compositionally biased stretch (low complexity) spans 321–333; it reads LPLSGPAGAPPLG. Basic residues predominate over residues 352 to 361; sequence SRRKARHKAS. Composition is skewed to low complexity over residues 422-435 and 517-534; these read SPLLSSAGPGSPAA and GTTLPTTSGSGPLSGEPP. Over residues 1096-1107 the composition is skewed to polar residues; sequence SQRTPQGEQSRN. A compositionally biased stretch (low complexity) spans 1160 to 1174; the sequence is TGGSFSSEGTGSQTS.

This is an uncharacterized protein from Mus musculus (Mouse).